Reading from the N-terminus, the 328-residue chain is MTKEVLIHQIIDVLSRAGFALSDRCNIRPRSFDVAARKDETLLLCKVLFNIDGLNEETAREMKYLAEYLGGSAIVVGAKTRDQMLEDSVVYMRYDILALNVQTLYDYFVENIKPLVSAAPGGLYISIEGDLLKKARTDQSMSLGTLASMVGVSRRTISKYEEEGMDASIDVVLQLEDIFGVELARPIDILKSCGSRKPRKKAEPEKEDPQVKHNALLPEDLILNTISMLGYDVLPTAQAPFKAISRDKSSVILTGVSEFNTTVVKRAHLMSSISCITETQSVFIINGRSKLKSVENTALIEKKELDKISDSQELLEFIEERKDTNSGA.

One can recognise an HTH cro/C1-type domain in the interval 132 to 190 (LKKARTDQSMSLGTLASMVGVSRRTISKYEEEGMDASIDVVLQLEDIFGVELARPIDIL). The H-T-H motif DNA-binding region spans 143 to 162 (LGTLASMVGVSRRTISKYEE).

The protein is Putative HTH-type transcriptional regulatory protein MA_3524 of Methanosarcina acetivorans (strain ATCC 35395 / DSM 2834 / JCM 12185 / C2A).